The primary structure comprises 440 residues: D-serine dehydratase (440 aa).

Lys116 bears the N6-(pyridoxal phosphate)lysine mark.

It belongs to the serine/threonine dehydratase family. DsdA subfamily. As to quaternary structure, monomer. It depends on pyridoxal 5'-phosphate as a cofactor.

The catalysed reaction is D-serine = pyruvate + NH4(+). In Salmonella enteritidis PT4 (strain P125109), this protein is D-serine dehydratase.